The primary structure comprises 426 residues: 3-phosphoshikimate 1-carboxyvinyltransferase (426 aa).

Residues K22, S23, and R27 each coordinate 3-phosphoshikimate. Position 22 (K22) interacts with phosphoenolpyruvate. G96 and R124 together coordinate phosphoenolpyruvate. 3-phosphoshikimate is bound by residues S170, S171, Q172, S198, D314, N337, and K341. A phosphoenolpyruvate-binding site is contributed by Q172. D314 functions as the Proton acceptor in the catalytic mechanism. R345, R387, and K412 together coordinate phosphoenolpyruvate.

It belongs to the EPSP synthase family. Monomer.

It is found in the cytoplasm. The enzyme catalyses 3-phosphoshikimate + phosphoenolpyruvate = 5-O-(1-carboxyvinyl)-3-phosphoshikimate + phosphate. Its pathway is metabolic intermediate biosynthesis; chorismate biosynthesis; chorismate from D-erythrose 4-phosphate and phosphoenolpyruvate: step 6/7. Its function is as follows. Catalyzes the transfer of the enolpyruvyl moiety of phosphoenolpyruvate (PEP) to the 5-hydroxyl of shikimate-3-phosphate (S3P) to produce enolpyruvyl shikimate-3-phosphate and inorganic phosphate. This is 3-phosphoshikimate 1-carboxyvinyltransferase from Shewanella sp. (strain ANA-3).